A 96-amino-acid polypeptide reads, in one-letter code: UPF0235 protein CKO_04329 (96 aa).

Belongs to the UPF0235 family.

This chain is UPF0235 protein CKO_04329, found in Citrobacter koseri (strain ATCC BAA-895 / CDC 4225-83 / SGSC4696).